We begin with the raw amino-acid sequence, 794 residues long: Zinc finger protein 148 (794 aa).

A Glycyl lysine isopeptide (Lys-Gly) (interchain with G-Cter in SUMO2) cross-link involves residue Lys6. Ser51 carries the phosphoserine modification. Glycyl lysine isopeptide (Lys-Gly) (interchain with G-Cter in SUMO2) cross-links involve residues Lys88, Lys115, and Lys132. The segment at 171 to 193 adopts a C2H2-type 1 zinc-finger fold; sequence HVCEHCNAAFRTNYHLQRHVFIH. Thr194 carries the post-translational modification Phosphothreonine. C2H2-type zinc fingers lie at residues 199-221 and 227-249; these read FQCS…EKIH and FRCD…KRTH. Ser250 bears the Phosphoserine mark. The C2H2-type 4 zinc-finger motif lies at 255–278; the sequence is YQCEYCLQYFSRTDRVLKHKRMCH. Residue Lys291 forms a Glycyl lysine isopeptide (Lys-Gly) (interchain with G-Cter in SUMO2) linkage. The segment at 298-338 is disordered; that stretch reads EEDSGFSTSPKDNSLPKKKRQKTEKKSSGMDKESSLDKSDL. A phosphoserine mark is found at Ser301 and Ser306. Lys308 is covalently cross-linked (Glycyl lysine isopeptide (Lys-Gly) (interchain with G-Cter in SUMO2)). A compositionally biased stretch (basic and acidic residues) spans 321–338; it reads EKKSSGMDKESSLDKSDL. Residue Lys356 forms a Glycyl lysine isopeptide (Lys-Gly) (interchain with G-Cter in SUMO1); alternate linkage. Lys356 participates in a covalent cross-link: Glycyl lysine isopeptide (Lys-Gly) (interchain with G-Cter in SUMO2); alternate. Lys402 participates in a covalent cross-link: Glycyl lysine isopeptide (Lys-Gly) (interchain with G-Cter in SUMO2). At Ser412 the chain carries Phosphoserine. Glycyl lysine isopeptide (Lys-Gly) (interchain with G-Cter in SUMO2) cross-links involve residues Lys421 and Lys424. The segment covering 575 to 588 has biased composition (polar residues); the sequence is SSEVPEVTQSENVG. A disordered region spans residues 575–596; it reads SSEVPEVTQSENVGSSSQASSS. At Lys607 the chain carries N6-acetyllysine. Phosphoserine is present on residues Ser665 and Ser784. The tract at residues 775–794 is disordered; it reads NDNRAGMTSSPDATTGQTFG.

It belongs to the krueppel C2H2-type zinc-finger protein family. Interacts with HNRNPDL. Interacts with the 5FMC complex; the interaction requires association with CHTOP. Interacts with CAVIN1. In terms of processing, sumoylated with SUMO2. Desumoylated by SENP3, resulting in the stimulation of transcription of its target genes.

It is found in the nucleus. Involved in transcriptional regulation. Represses the transcription of a number of genes including gastrin, stromelysin and enolase. Binds to the G-rich box in the enhancer region of these genes. This Bos taurus (Bovine) protein is Zinc finger protein 148 (ZNF148).